The primary structure comprises 453 residues: MASLMLSLGSTSLLPREINKDKLKLGTSASNPFLKAKSFSRVTMTVAVKPSRFEGITMAPPDPILGVSEAFKADTNGMKLNLGVGAYRTEELQPYVLNVVKKAENLMLERGDNKEYLPIEGLAAFNKATAELLFGAGHPVIKEQRVATIQGLSGTGSLRLAAALIERYFPGAKVVISSPTWGNHKNIFNDAKVPWSEYRYYDPKTIGLDFEGMIADIKEAPEGSFILLHGCAHNPTGIDPTPEQWVKIADVIQEKNHIPFFDVAYQGFASGSLDEDAASVRLFAERGMEFFVAQSYSKNLGLYAERIGAINVVCSSADAATRVKSQLKRIARPMYSNPPVHGARIVANVVGDVTMFSEWKAEMEMMAGRIKTVRQELYDSLVSKDKSGKDWSFILKQIGMFSFTGLNKAQSDNMTDKWHVYMTKDGRISLAGLSLAKCEYLADAIIDSYHNVS.

Residues 1–44 (MASLMLSLGSTSLLPREINKDKLKLGTSASNPFLKAKSFSRVTM) constitute a chloroplast transit peptide. L-aspartate is bound by residues glycine 85, tryptophan 181, and asparagine 234. Lysine 298 bears the N6-(pyridoxal phosphate)lysine mark. Arginine 427 is an L-aspartate binding site.

Belongs to the class-I pyridoxal-phosphate-dependent aminotransferase family. In terms of assembly, homodimer. It depends on pyridoxal 5'-phosphate as a cofactor.

It is found in the plastid. The protein resides in the chloroplast. Its subcellular location is the amyloplast. It carries out the reaction L-aspartate + 2-oxoglutarate = oxaloacetate + L-glutamate. Its function is as follows. Amino acid aminotransferase important for the metabolism of amino acids and Krebs-cycle related organic acids. No activity with D-Asp or D-Ala as amino donors. In plants, it is involved in nitrogen metabolism and in aspects of carbon and energy metabolism. In Arabidopsis thaliana (Mouse-ear cress), this protein is Aspartate aminotransferase, chloroplastic (ASP5).